Reading from the N-terminus, the 453-residue chain is TATA box-binding protein-associated factor RNA polymerase I subunit A (453 aa).

Component of the transcription factor SL1/TIF-IB complex, composed of TBP and at least TAF1A, TAF1B, TAF1C and TAF1D. In the complex interacts directly with TBP, TAF1A and TAF1B. Interaction of the SL1/TIF-IB subunits with TBP excludes interaction of TBP with the transcription factor IID (TFIID) subunits. Interacts with UBFT. Interacts with CEBPA (isoform 1 and isoform 4). Part of Pol I pre-initiation complex (PIC), in which Pol I core assembles with RRN3 and promoter-bound UTBF and SL1/TIF-IB complex.

The protein resides in the nucleus. Its subcellular location is the nucleolus. Functionally, component of the transcription factor SL1/TIF-IB complex, which is involved in the assembly of the PIC (pre-initiation complex) during RNA polymerase I-dependent transcription. The rate of PIC formation probably is primarily dependent on the rate of association of SL1/TIF-IB with the rDNA promoter. SL1/TIF-IB is involved in stabilization of nucleolar transcription factor 1/UBTF on rDNA. Formation of SL1/TIF-IB excludes the association of TBP with TFIID subunits. This chain is TATA box-binding protein-associated factor RNA polymerase I subunit A (Taf1a), found in Mus musculus (Mouse).